The following is a 207-amino-acid chain: Large ribosomal subunit protein uL4 (207 aa).

The segment at 50–76 (AVKNRSAVSGGGRKPWKQKGTGRARQG) is disordered.

It belongs to the universal ribosomal protein uL4 family. As to quaternary structure, part of the 50S ribosomal subunit.

Its function is as follows. One of the primary rRNA binding proteins, this protein initially binds near the 5'-end of the 23S rRNA. It is important during the early stages of 50S assembly. It makes multiple contacts with different domains of the 23S rRNA in the assembled 50S subunit and ribosome. Forms part of the polypeptide exit tunnel. The protein is Large ribosomal subunit protein uL4 of Staphylococcus aureus (strain JH9).